Here is a 735-residue protein sequence, read N- to C-terminus: Ion-translocating oxidoreductase complex subunit C (735 aa).

2 consecutive 4Fe-4S ferredoxin-type domains span residues 368–397 (MGAPQEEKSCIRCSACADACPADLLPQQLY) and 407–436 (KATAHHIADCIECGACAWVCPSNIPLVQYF). [4Fe-4S] cluster contacts are provided by cysteine 377, cysteine 380, cysteine 383, cysteine 387, cysteine 416, cysteine 419, cysteine 422, and cysteine 426. A disordered region spans residues 534–715 (QARAKQAAHP…AVDPRKAAVA (182 aa)). Over residues 666 to 689 (QQAGSEPAEPAAPRKAAVEAAIAR) the composition is skewed to low complexity.

The protein belongs to the 4Fe4S bacterial-type ferredoxin family. RnfC subfamily. The complex is composed of six subunits: RsxA, RsxB, RsxC, RsxD, RsxE and RsxG. Requires [4Fe-4S] cluster as cofactor.

It localises to the cell inner membrane. Its function is as follows. Part of a membrane-bound complex that couples electron transfer with translocation of ions across the membrane. Required to maintain the reduced state of SoxR. In Salmonella paratyphi B (strain ATCC BAA-1250 / SPB7), this protein is Ion-translocating oxidoreductase complex subunit C.